The sequence spans 362 residues: Protein Tob1 (362 aa).

The Bipartite nuclear localization signal motif lies at 22-39; that stretch reads RRRVNIFGEELERLLKKK. The tract at residues 82–92 is important for nuclear localization; that stretch reads VRGNLPQDLSV. Residues 144–160 show a composition bias toward low complexity; the sequence is DPASSVSSSPSPPFGHS. A disordered region spans residues 144 to 171; that stretch reads DPASSVSSSPSPPFGHSAAVSPTFMPRS. The segment at 161–220 is required for interaction with CPEB3; that stretch reads AAVSPTFMPRSTQPLTFTTATFAATKFGSTKMKNSGRSSKVARTSPINLGLTVNVNDLLK. T204 is modified (phosphothreonine). The Nuclear export signal motif lies at 228–236; the sequence is VHSLYGLGL. Residues 234–284 form a disordered region; the sequence is LGLGSQQQPQPQPQQQQQQQPSSSQPPPPLPQQQQQQPQQQQQQQQQTSAL. Low complexity-rich tracts occupy residues 238-256 and 265-280; these read SQQQ…QPSS and QQQQ…QQQQ.

This sequence belongs to the BTG family. In terms of assembly, interacts with ERBB2. Interacts with CNOT7. Interacts with CPEB3 (via C-terminal RNA-binding region); recruits CNOT7 to CPEB3 to form a ternary complex required for mRNA deadenylation and decay. Interacts with CNOT8. Interacts with CPEB4. Post-translationally, phosphorylated on Ser and Thr residues. In terms of tissue distribution, ubiquitous.

The protein localises to the cytoplasm. It is found in the nucleus. In terms of biological role, anti-proliferative protein; the function is mediated by association with deadenylase subunits of the CCR4-NOT complex. Mediates CPEB3-accelerated mRNA deadenylation by binding to CPEB3 and recruiting CNOT7 which leads to target mRNA deadenylation and decay. This chain is Protein Tob1 (Tob1), found in Mus musculus (Mouse).